The following is a 189-amino-acid chain: Peptidyl-tRNA hydrolase (189 aa).

TRNA is bound at residue Y15. The active-site Proton acceptor is H20. 3 residues coordinate tRNA: F66, N68, and N114.

The protein belongs to the PTH family. Monomer.

The protein localises to the cytoplasm. It carries out the reaction an N-acyl-L-alpha-aminoacyl-tRNA + H2O = an N-acyl-L-amino acid + a tRNA + H(+). In terms of biological role, hydrolyzes ribosome-free peptidyl-tRNAs (with 1 or more amino acids incorporated), which drop off the ribosome during protein synthesis, or as a result of ribosome stalling. Functionally, catalyzes the release of premature peptidyl moieties from peptidyl-tRNA molecules trapped in stalled 50S ribosomal subunits, and thus maintains levels of free tRNAs and 50S ribosomes. The sequence is that of Peptidyl-tRNA hydrolase from Streptococcus pneumoniae (strain P1031).